The primary structure comprises 372 residues: High-affinity lysophosphatidic acid receptor (372 aa).

The Extracellular segment spans residues 1–38 (MGCNNTALDNCMLPNLSIATAPLDLRFAFSTPLRMLLA). Residues Asn4 and Asn15 are each glycosylated (N-linked (GlcNAc...) asparagine). The chain crosses the membrane as a helical span at residues 39–59 (IIMILMIAIAFLGNAIVCLIV). Residues 60 to 80 (YQKPAMRSAINLLLATLAFSD) are Cytoplasmic-facing. A helical transmembrane segment spans residues 81–101 (IMLSLFCMPFTAVTIITGSWL). Over 102–108 (FGTQFCQ) the chain is Extracellular. A helical membrane pass occupies residues 109-129 (ISAMLYWFFVLEGVAILLIIS). Residues 130-149 (VDRFLIIVQRQDKLNPHRAK) are Cytoplasmic-facing. The helical transmembrane segment at 150–170 (IMIAASWVLSFCISLPSVVGW) threads the bilayer. Residues 171–198 (TLVEVPTRAPQCVLGYTEFSADRVYAVM) lie on the Extracellular side of the membrane. The chain crosses the membrane as a helical span at residues 199–219 (LIVAVFFIPFSVMLYSYLCIL). Topologically, residues 220 to 268 (NTVRRNAVRIHTHADSLCLSQVSKLGLMGLQRPHQMNVDMSFKTRAFTT) are cytoplasmic. The chain crosses the membrane as a helical span at residues 269-289 (ILILFIGFSLCWLPHSVFSLL). At 290–301 (SVFSRTFYYSSS) the chain is on the extracellular side. Residues 302 to 324 (FYSISTCTLWLTYLKSVFNPVIY) form a helical membrane-spanning segment. Residues 325 to 372 (CWRIKKFREACLEFMPKTFKILPNVRGRTRRRIRPSTIYVCGEHQSAV) lie on the Cytoplasmic side of the membrane.

Belongs to the G-protein coupled receptor 1 family. Ubiquitously expressed.

The protein localises to the cell membrane. Highly selective receptor for lysophosphatidic acid (LPA), a mediator of diverse cellular activities. The protein is High-affinity lysophosphatidic acid receptor of Xenopus laevis (African clawed frog).